A 310-amino-acid polypeptide reads, in one-letter code: Glutamyl-Q tRNA(Asp) synthetase (310 aa).

Residues 24-28 (RFAPS) and Glu-60 contribute to the L-glutamate site. The 'HIGH' region signature appears at 27-37 (PSPSGPLHFGS). 4 residues coordinate Zn(2+): Cys-116, Cys-118, Tyr-130, and Cys-134. L-glutamate-binding residues include Tyr-187 and Arg-205. Residues 243–247 (KLSKQ) carry the 'KMSKS' region motif. Residue Lys-246 participates in ATP binding.

The protein belongs to the class-I aminoacyl-tRNA synthetase family. GluQ subfamily. Zn(2+) is required as a cofactor.

Its function is as follows. Catalyzes the tRNA-independent activation of glutamate in presence of ATP and the subsequent transfer of glutamate onto a tRNA(Asp). Glutamate is transferred on the 2-amino-5-(4,5-dihydroxy-2-cyclopenten-1-yl) moiety of the queuosine in the wobble position of the QUC anticodon. This is Glutamyl-Q tRNA(Asp) synthetase from Photobacterium profundum (strain SS9).